The sequence spans 123 residues: Histone H2B (123 aa).

A disordered region spans residues 1-32 (MPPKAASKGAKKAASKAKAARSTDKKKRRRRR). Positions 9–32 (GAKKAASKAKAARSTDKKKRRRRR) are enriched in basic residues. Ser110 carries O-linked (GlcNAc) serine glycosylation. A Glycyl lysine isopeptide (Lys-Gly) (interchain with G-Cter in ubiquitin) cross-link involves residue Lys118.

The protein belongs to the histone H2B family. As to quaternary structure, the nucleosome is a histone octamer containing two molecules each of H2A, H2B, H3 and H4 assembled in one H3-H4 heterotetramer and two H2A-H2B heterodimers. The octamer wraps approximately 147 bp of DNA. Monoubiquitination of Lys-118 gives a specific tag for epigenetic transcriptional activation and is also prerequisite for histone H3 'Lys-4' and 'Lys-79' methylation.

Its subcellular location is the nucleus. The protein resides in the chromosome. Core component of nucleosome. Nucleosomes wrap and compact DNA into chromatin, limiting DNA accessibility to the cellular machineries which require DNA as a template. Histones thereby play a central role in transcription regulation, DNA repair, DNA replication and chromosomal stability. DNA accessibility is regulated via a complex set of post-translational modifications of histones, also called histone code, and nucleosome remodeling. This Urechis caupo (Innkeeper worm) protein is Histone H2B.